Reading from the N-terminus, the 379-residue chain is Queuine tRNA-ribosyltransferase (379 aa).

The Proton acceptor role is filled by Asp-94. Substrate contacts are provided by residues 94–98, Asp-148, Gln-191, and Gly-218; that span reads DSGGF. Residues 249–255 are RNA binding; sequence GVGSPDS. Residue Asp-268 is the Nucleophile of the active site. An RNA binding; important for wobble base 34 recognition region spans residues 273-277; sequence TRIAR. Zn(2+) contacts are provided by Cys-306, Cys-308, Cys-311, and His-337.

This sequence belongs to the queuine tRNA-ribosyltransferase family. In terms of assembly, homodimer. Within each dimer, one monomer is responsible for RNA recognition and catalysis, while the other monomer binds to the replacement base PreQ1. Zn(2+) serves as cofactor.

The catalysed reaction is 7-aminomethyl-7-carbaguanine + guanosine(34) in tRNA = 7-aminomethyl-7-carbaguanosine(34) in tRNA + guanine. The protein operates within tRNA modification; tRNA-queuosine biosynthesis. In terms of biological role, catalyzes the base-exchange of a guanine (G) residue with the queuine precursor 7-aminomethyl-7-deazaguanine (PreQ1) at position 34 (anticodon wobble position) in tRNAs with GU(N) anticodons (tRNA-Asp, -Asn, -His and -Tyr). Catalysis occurs through a double-displacement mechanism. The nucleophile active site attacks the C1' of nucleotide 34 to detach the guanine base from the RNA, forming a covalent enzyme-RNA intermediate. The proton acceptor active site deprotonates the incoming PreQ1, allowing a nucleophilic attack on the C1' of the ribose to form the product. After dissociation, two additional enzymatic reactions on the tRNA convert PreQ1 to queuine (Q), resulting in the hypermodified nucleoside queuosine (7-(((4,5-cis-dihydroxy-2-cyclopenten-1-yl)amino)methyl)-7-deazaguanosine). This Halalkalibacterium halodurans (strain ATCC BAA-125 / DSM 18197 / FERM 7344 / JCM 9153 / C-125) (Bacillus halodurans) protein is Queuine tRNA-ribosyltransferase.